The chain runs to 304 residues: Acetylglutamate kinase (304 aa).

Substrate-binding positions include 82-83, R104, and N197; that span reads GG.

The protein belongs to the acetylglutamate kinase family. ArgB subfamily.

It localises to the cytoplasm. It carries out the reaction N-acetyl-L-glutamate + ATP = N-acetyl-L-glutamyl 5-phosphate + ADP. It functions in the pathway amino-acid biosynthesis; L-arginine biosynthesis; N(2)-acetyl-L-ornithine from L-glutamate: step 2/4. Functionally, catalyzes the ATP-dependent phosphorylation of N-acetyl-L-glutamate. This Prochlorococcus marinus (strain NATL1A) protein is Acetylglutamate kinase.